The primary structure comprises 172 residues: 3-phenylpropionate/cinnamic acid dioxygenase subunit beta (172 aa).

This sequence belongs to the bacterial ring-hydroxylating dioxygenase beta subunit family. As to quaternary structure, this dioxygenase system consists of four proteins: the two subunits of the hydroxylase component (HcaE and HcaF), a ferredoxin (HcaC) and a ferredoxin reductase (HcaD).

It carries out the reaction 3-phenylpropanoate + NADH + O2 + H(+) = 3-(cis-5,6-dihydroxycyclohexa-1,3-dien-1-yl)propanoate + NAD(+). The enzyme catalyses (E)-cinnamate + NADH + O2 + H(+) = (2E)-3-(cis-5,6-dihydroxycyclohexa-1,3-dien-1-yl)prop-2-enoate + NAD(+). It functions in the pathway aromatic compound metabolism; 3-phenylpropanoate degradation. Its function is as follows. Part of the multicomponent 3-phenylpropionate dioxygenase. Converts 3-phenylpropionic acid (PP) and cinnamic acid (CI) into 3-phenylpropionate-dihydrodiol (PP-dihydrodiol) and cinnamic acid-dihydrodiol (CI-dihydrodiol), respectively. This is 3-phenylpropionate/cinnamic acid dioxygenase subunit beta from Escherichia coli O17:K52:H18 (strain UMN026 / ExPEC).